The following is a 138-amino-acid chain: MRILGLDLGTKTLGVAISDEMGWTAQGIETIKIDEAGGDFGLSRLSEIVSQYGTDKIVLGFPKNMNGTVGPRGEASQSFAKVLENTYNVPVVLWDERLSTMAAEKMLISADVSRQKRKKVIDKMAAVMILQGYLDSLN.

This sequence belongs to the YqgF nuclease family.

The protein localises to the cytoplasm. Functionally, could be a nuclease involved in processing of the 5'-end of pre-16S rRNA. The sequence is that of Putative pre-16S rRNA nuclease from Bacillus pumilus (strain SAFR-032).